The chain runs to 469 residues: UTP--glucose-1-phosphate uridylyltransferase 2 (469 aa).

Ala2 carries the post-translational modification N-acetylalanine. UTP contacts are provided by residues Leu85 to Gly88, Lys99, Gln162, and Gly191. A substrate-binding site is contributed by Gly87–Gly88. Substrate contacts are provided by residues His192 and Asn220–Asp222. Residues Asp222 and Lys360 each contribute to the UTP site.

The protein belongs to the UDPGP type 1 family. As to expression, expressed in cauline leaves, flowers and siliques.

The protein localises to the cytoplasm. The catalysed reaction is alpha-D-glucose 1-phosphate + UTP + H(+) = UDP-alpha-D-glucose + diphosphate. Functionally, converts glucose 1-phosphate to UDP-glucose, which is the major glycosyl donor for polysaccharides. Acts redundantly with UGP1 and is essential for the synthesis of sucrose, starch and cell wall, and callose deposition. The chain is UTP--glucose-1-phosphate uridylyltransferase 2 from Arabidopsis thaliana (Mouse-ear cress).